A 406-amino-acid chain; its full sequence is L-carnitine CoA-transferase (406 aa).

2 residues coordinate CoA: K98 and R105. The active-site Nucleophile is the D170.

This sequence belongs to the CoA-transferase III family. CaiB subfamily. As to quaternary structure, homodimer.

It localises to the cytoplasm. The catalysed reaction is crotonobetainyl-CoA + (R)-carnitine = crotonobetaine + (R)-carnitinyl-CoA. The enzyme catalyses 4-(trimethylamino)butanoyl-CoA + (R)-carnitine = (R)-carnitinyl-CoA + 4-(trimethylamino)butanoate. The protein operates within amine and polyamine metabolism; carnitine metabolism. Its function is as follows. Catalyzes the reversible transfer of the CoA moiety from gamma-butyrobetainyl-CoA to L-carnitine to generate L-carnitinyl-CoA and gamma-butyrobetaine. Is also able to catalyze the reversible transfer of the CoA moiety from gamma-butyrobetainyl-CoA or L-carnitinyl-CoA to crotonobetaine to generate crotonobetainyl-CoA. The polypeptide is L-carnitine CoA-transferase (Proteus mirabilis (strain HI4320)).